The primary structure comprises 240 residues: Endonuclease NucS 1 (240 aa).

The protein belongs to the NucS endonuclease family.

It localises to the cytoplasm. Its function is as follows. Cleaves both 3' and 5' ssDNA extremities of branched DNA structures. The protein is Endonuclease NucS 1 of Halobacterium salinarum (strain ATCC 700922 / JCM 11081 / NRC-1) (Halobacterium halobium).